Reading from the N-terminus, the 340-residue chain is Phosphoribosylformylglycinamidine cyclo-ligase (340 aa).

It belongs to the AIR synthase family.

It is found in the cytoplasm. It carries out the reaction 2-formamido-N(1)-(5-O-phospho-beta-D-ribosyl)acetamidine + ATP = 5-amino-1-(5-phospho-beta-D-ribosyl)imidazole + ADP + phosphate + H(+). Its pathway is purine metabolism; IMP biosynthesis via de novo pathway; 5-amino-1-(5-phospho-D-ribosyl)imidazole from N(2)-formyl-N(1)-(5-phospho-D-ribosyl)glycinamide: step 2/2. The polypeptide is Phosphoribosylformylglycinamidine cyclo-ligase (Streptococcus pyogenes serotype M3 (strain ATCC BAA-595 / MGAS315)).